Reading from the N-terminus, the 91-residue chain is Acylphosphatase (91 aa).

One can recognise an Acylphosphatase-like domain in the interval 3 to 89 (TLLVRISGKV…PDQPGFSQKP (87 aa)). Residues Arg18 and Asn36 contribute to the active site.

It belongs to the acylphosphatase family.

The enzyme catalyses an acyl phosphate + H2O = a carboxylate + phosphate + H(+). In Rhodospirillum rubrum (strain ATCC 11170 / ATH 1.1.1 / DSM 467 / LMG 4362 / NCIMB 8255 / S1), this protein is Acylphosphatase (acyP).